Here is a 639-residue protein sequence, read N- to C-terminus: UvrABC system protein C (639 aa).

The span at 1-16 (MTDLPVDEPDRDDGAD) shows a compositional bias: acidic residues. Residues 1-28 (MTDLPVDEPDRDDGADQPDAGADPATPR) form a disordered region. Residues 17 to 27 (QPDAGADPATP) are compositionally biased toward low complexity. One can recognise a GIY-YIG domain in the interval 42–120 (SSPGVYRMID…IKKLKPRYNI (79 aa)). A UVR domain is found at 230–265 (KALQHDLAKRMDEAAQALDYEQAAIFRDRIKALTNV).

Belongs to the UvrC family. As to quaternary structure, interacts with UvrB in an incision complex.

The protein resides in the cytoplasm. Its function is as follows. The UvrABC repair system catalyzes the recognition and processing of DNA lesions. UvrC both incises the 5' and 3' sides of the lesion. The N-terminal half is responsible for the 3' incision and the C-terminal half is responsible for the 5' incision. This chain is UvrABC system protein C, found in Rhodospirillum rubrum (strain ATCC 11170 / ATH 1.1.1 / DSM 467 / LMG 4362 / NCIMB 8255 / S1).